The following is a 294-amino-acid chain: MIYGSIVALVTPMNSDGTVDYKSLESLVEYHIAQGTDAIVAVGTTGESATLPAKEHIAVVEQTVKFAAGRIPIIGGNGANATAEAVELTKGLSNVGVAAMLGVTPYYNKPTPKGLIAHYTAVAASTDVPQILYNVPGRTAVDMRPETVAQLVGIKNIIGVKEATGDLSRVKELRNLCGDDFLLYSGDDATAREFLSLGGNGVISVANNIVPKQFKAMCDAALSGDVSAALSAEESIKELFSVLFCEANPIPVKWAVHRMGLISNGTIRLPLTELSTEFHGLLLEAMKNARIEVK.

Pyruvate is bound at residue threonine 45. The active-site Proton donor/acceptor is tyrosine 133. Lysine 161 (schiff-base intermediate with substrate) is an active-site residue. Isoleucine 203 is a pyruvate binding site.

It belongs to the DapA family. In terms of assembly, homotetramer; dimer of dimers.

Its subcellular location is the cytoplasm. It catalyses the reaction L-aspartate 4-semialdehyde + pyruvate = (2S,4S)-4-hydroxy-2,3,4,5-tetrahydrodipicolinate + H2O + H(+). Its pathway is amino-acid biosynthesis; L-lysine biosynthesis via DAP pathway; (S)-tetrahydrodipicolinate from L-aspartate: step 3/4. In terms of biological role, catalyzes the condensation of (S)-aspartate-beta-semialdehyde [(S)-ASA] and pyruvate to 4-hydroxy-tetrahydrodipicolinate (HTPA). The sequence is that of 4-hydroxy-tetrahydrodipicolinate synthase from Shewanella pealeana (strain ATCC 700345 / ANG-SQ1).